The sequence spans 587 residues: Glutamine--tRNA ligase (587 aa).

Residues 58–68 (PEPNGYLHIGH) carry the 'HIGH' region motif. ATP contacts are provided by residues 59 to 61 (EPN) and 65 to 71 (HIGHAKS). The L-glutamine site is built by Asp-91 and Tyr-240. ATP contacts are provided by residues Thr-259 and 294–295 (RL). Residues 301–305 (VTSKR) carry the 'KMSKS' region motif.

The protein belongs to the class-I aminoacyl-tRNA synthetase family. Monomer.

It is found in the cytoplasm. It carries out the reaction tRNA(Gln) + L-glutamine + ATP = L-glutaminyl-tRNA(Gln) + AMP + diphosphate. This is Glutamine--tRNA ligase from Bordetella pertussis (strain Tohama I / ATCC BAA-589 / NCTC 13251).